The following is a 406-amino-acid chain: S-adenosylmethionine synthase (406 aa).

Histidine 16 contacts ATP. Aspartate 18 provides a ligand contact to Mg(2+). A K(+)-binding site is contributed by glutamate 44. Glutamate 57 and glutamine 100 together coordinate L-methionine. The tract at residues 100-110 is flexible loop; that stretch reads QSVDIAQGVDR. Residues 165–167, aspartate 241, 247–248, alanine 264, and lysine 268 contribute to the ATP site; these read DAK and RK. Aspartate 241 is a binding site for L-methionine. Lysine 272 contributes to the L-methionine binding site.

The protein belongs to the AdoMet synthase family. Homotetramer; dimer of dimers. Requires Mg(2+) as cofactor. K(+) serves as cofactor.

The protein localises to the cytoplasm. The enzyme catalyses L-methionine + ATP + H2O = S-adenosyl-L-methionine + phosphate + diphosphate. It participates in amino-acid biosynthesis; S-adenosyl-L-methionine biosynthesis; S-adenosyl-L-methionine from L-methionine: step 1/1. Its function is as follows. Catalyzes the formation of S-adenosylmethionine (AdoMet) from methionine and ATP. The overall synthetic reaction is composed of two sequential steps, AdoMet formation and the subsequent tripolyphosphate hydrolysis which occurs prior to release of AdoMet from the enzyme. In Chromohalobacter salexigens (strain ATCC BAA-138 / DSM 3043 / CIP 106854 / NCIMB 13768 / 1H11), this protein is S-adenosylmethionine synthase.